Here is a 288-residue protein sequence, read N- to C-terminus: ATP synthase gamma chain (288 aa).

Belongs to the ATPase gamma chain family. F-type ATPases have 2 components, CF(1) - the catalytic core - and CF(0) - the membrane proton channel. CF(1) has five subunits: alpha(3), beta(3), gamma(1), delta(1), epsilon(1). CF(0) has three main subunits: a, b and c.

It localises to the cell inner membrane. In terms of biological role, produces ATP from ADP in the presence of a proton gradient across the membrane. The gamma chain is believed to be important in regulating ATPase activity and the flow of protons through the CF(0) complex. This is ATP synthase gamma chain from Chromobacterium violaceum (strain ATCC 12472 / DSM 30191 / JCM 1249 / CCUG 213 / NBRC 12614 / NCIMB 9131 / NCTC 9757 / MK).